The primary structure comprises 420 residues: Torsin-4A-A (420 aa).

Residues 130–150 (CLLLFIGIVCFQILNAIENLD) form a helical membrane-spanning segment. 202-209 (GPSGVGKS) lines the ATP pocket.

It belongs to the ClpA/ClpB family. Torsin subfamily.

Its subcellular location is the membrane. The protein is Torsin-4A-A (tor4a-a) of Xenopus laevis (African clawed frog).